The primary structure comprises 694 residues: MVKLAKTPKNQMKQKKMAPPPKKVEESEEEESSDLEESSGEEVMVPPKKQQKAAVTPAKKAATPAKKAATPAKKAVTPAKKAVATPAKKAVAPSPKKAAVVGKGAKNGKNAKKEESEEEDEDDEDDEEDEDEEEESDEEEEPAVPVKPAAKKSAAAVPAKKPAVVPAKQESEEEEEEDDEEEDEEDDESEDEAMDTTPAPVKKPTPAKATPAKAKAESEDEEDEEDEDEDEEDEDDEEEDEEESEDEKPVKEAPGKRKKEMANKSAPEAKKKKTETPASAFSLFVKNLTPTKDYEELRTAIKEFFGKKNLQVSEVRIGSSKRFGYVDFLSAEDMDKALQLNGKKLMGLEIKLEKAKSKESLKENKKERDARTLFVKNLPYRVTEDEMKNVFENALEVRLVLNKEGSSKGMAYIEFKTEAEAEKALEEKQGTEVDGRAMVIDYTGEKSQQESQKGGGERESKTLIVNNLSYAASEETLQELFKKATSIKMPQNNQGRPKGYAFVEFPTAEDAKEALNSCNNTEIEGRAIRLEFSSPSWQKGNMNARGGFNQQSKTLFVRGLSEDTTEETLRESFEGSISARIVTDRDTGSSKGFGFVDFSSPEDAKAAKEAMEDGEIDGNKVTLDFAKPKGEFQRGGGFGGGFGGRGGRGGRGGGRGGFGGRGGGRGFGGRGGGFRGGRGGGGDHKPQGKKIKFE.

Positions 1-277 are disordered; that stretch reads MVKLAKTPKN…EAKKKKTETP (277 aa). The span at 26–40 shows a compositional bias: acidic residues; sequence ESEEEESSDLEESSG. The span at 46-108 shows a compositional bias: low complexity; that stretch reads PPKKQQKAAV…AVVGKGAKNG (63 aa). Repeat copies occupy residues 55–61, 62–68, 69–75, 76–82, and 84–90. Residues 55–90 are 5 X 7 AA tandem repeats of X-T-P-X-K-K-X; sequence VTPAKKAATPAKKAATPAKKAVTPAKKAVATPAKKA. Phosphoserine is present on residues Ser-116 and Ser-136. A compositionally biased stretch (acidic residues) spans 116–142; sequence SEEEDEDDEDDEEDEDEEEESDEEEEP. The span at 143-168 shows a compositional bias: low complexity; it reads AVPVKPAAKKSAAAVPAKKPAVVPAK. Residue Ser-171 is modified to Phosphoserine. Residues 171–194 are compositionally biased toward acidic residues; it reads SEEEEEEDDEEEDEEDDESEDEAM. A compositionally biased stretch (low complexity) spans 196–213; it reads TTPAPVKKPTPAKATPAK. Positions 218–246 are enriched in acidic residues; that stretch reads SEDEEDEEDEDEDEEDEDDEEEDEEESED. RRM domains follow at residues 281 to 357, 371 to 445, 461 to 535, and 553 to 628; these read FSLF…KAKS, RTLF…YTGE, KTLI…FSSP, and KTLF…FAKP. The segment at 631–694 is disordered; sequence EFQRGGGFGG…KPQGKKIKFE (64 aa). A compositionally biased stretch (gly residues) spans 633 to 680; that stretch reads QRGGGFGGGFGGRGGRGGRGGGRGGFGGRGGGRGFGGRGGGFRGGRGG. Over residues 681–694 the composition is skewed to basic and acidic residues; that stretch reads GGDHKPQGKKIKFE.

In terms of processing, highly phosphorylated during mitosis.

The protein resides in the nucleus. The protein localises to the nucleolus. Functionally, nucleolin is the major nucleolar protein of growing eukaryotic cells. It is found associated with intranucleolar chromatin and pre-ribosomal particles. It induces chromatin decondensation by binding to histone H1. It is thought to play a role in pre-rRNA transcription and ribosome assembly. The polypeptide is Nucleolin (NCL) (Gallus gallus (Chicken)).